We begin with the raw amino-acid sequence, 346 residues long: Nitrilase 3 (346 aa).

Ser-2 carries the N-acetylserine modification. The CN hydrolase domain occupies 25-297 (VRVTIVQSST…EGLVTADLDL (273 aa)). Residue Glu-65 is the Proton acceptor of the active site. The active-site Proton donor is Lys-152. The active-site Nucleophile is the Cys-186.

This sequence belongs to the carbon-nitrogen hydrolase superfamily. Nitrilase family.

It localises to the cell membrane. The catalysed reaction is a nitrile + 2 H2O = a carboxylate + NH4(+). Functionally, can convert indole-3-acetonitrile to the plant hormone indole-3-acetic acid. This chain is Nitrilase 3 (NIT3), found in Arabidopsis thaliana (Mouse-ear cress).